We begin with the raw amino-acid sequence, 338 residues long: Heat-inducible transcription repressor HrcA (338 aa).

Belongs to the HrcA family.

Negative regulator of class I heat shock genes (grpE-dnaK-dnaJ and groELS operons). Prevents heat-shock induction of these operons. The sequence is that of Heat-inducible transcription repressor HrcA from Bacillus mycoides (strain KBAB4) (Bacillus weihenstephanensis).